The following is a 414-amino-acid chain: Serpin A3-6 (414 aa).

An N-terminal signal peptide occupies residues 1 to 25; sequence MRTERVSPLLALGILVAGLCSRVHC. N-linked (GlcNAc...) asparagine glycans are attached at residues N103, N183, N233, N267, and N321.

It belongs to the serpin family. Homodimer.

Its subcellular location is the cytoplasmic vesicle. The protein resides in the secretory vesicle. It is found in the chromaffin granule. It localises to the secreted. In terms of biological role, serine protease inhibitor. The polypeptide is Serpin A3-6 (Bos taurus (Bovine)).